Consider the following 192-residue polypeptide: Ion-translocating oxidoreductase complex subunit A (192 aa).

6 helical membrane passes run 5-25, 39-59, 65-85, 102-122, 134-154, and 171-191; these read LLLLISTVLVNNFVLVKFLGL, IGMSMATTFVLTLASILSYLV, LPFDLSYLRTMSFILVIAVVV, ALGIYLPLITTNCAVLGVALL, AIYGFGAAVGFSLVLILFSAM, and AIAMITAGLMSLAFMGFTGLV.

This sequence belongs to the NqrDE/RnfAE family. In terms of assembly, the complex is composed of six subunits: RnfA, RnfB, RnfC, RnfD, RnfE and RnfG.

It is found in the cell inner membrane. In terms of biological role, part of a membrane-bound complex that couples electron transfer with translocation of ions across the membrane. This is Ion-translocating oxidoreductase complex subunit A from Shewanella sp. (strain ANA-3).